The sequence spans 157 residues: Crossover junction endodeoxyribonuclease RuvC (157 aa).

Catalysis depends on residues D7, E67, and D140. Mg(2+)-binding residues include D7, E67, and D140.

It belongs to the RuvC family. In terms of assembly, homodimer which binds Holliday junction (HJ) DNA. The HJ becomes 2-fold symmetrical on binding to RuvC with unstacked arms; it has a different conformation from HJ DNA in complex with RuvA. In the full resolvosome a probable DNA-RuvA(4)-RuvB(12)-RuvC(2) complex forms which resolves the HJ. It depends on Mg(2+) as a cofactor.

It localises to the cytoplasm. It carries out the reaction Endonucleolytic cleavage at a junction such as a reciprocal single-stranded crossover between two homologous DNA duplexes (Holliday junction).. In terms of biological role, the RuvA-RuvB-RuvC complex processes Holliday junction (HJ) DNA during genetic recombination and DNA repair. Endonuclease that resolves HJ intermediates. Cleaves cruciform DNA by making single-stranded nicks across the HJ at symmetrical positions within the homologous arms, yielding a 5'-phosphate and a 3'-hydroxyl group; requires a central core of homology in the junction. The consensus cleavage sequence is 5'-(A/T)TT(C/G)-3'. Cleavage occurs on the 3'-side of the TT dinucleotide at the point of strand exchange. HJ branch migration catalyzed by RuvA-RuvB allows RuvC to scan DNA until it finds its consensus sequence, where it cleaves and resolves the cruciform DNA. In Rickettsia bellii (strain RML369-C), this protein is Crossover junction endodeoxyribonuclease RuvC.